We begin with the raw amino-acid sequence, 188 residues long: Large ribosomal subunit protein bL35m (188 aa).

Belongs to the bacterial ribosomal protein bL35 family.

Its subcellular location is the mitochondrion. The polypeptide is Large ribosomal subunit protein bL35m (Mrpl35) (Mus musculus (Mouse)).